The following is a 419-amino-acid chain: Imidazolonepropionase (419 aa).

Residues H87 and H89 each contribute to the Fe(3+) site. Residues H87 and H89 each coordinate Zn(2+). R96, Y159, and H192 together coordinate 4-imidazolone-5-propanoate. Y159 serves as a coordination point for N-formimidoyl-L-glutamate. H257 contributes to the Fe(3+) binding site. Residue H257 coordinates Zn(2+). Q260 provides a ligand contact to 4-imidazolone-5-propanoate. Residue D332 participates in Fe(3+) binding. D332 provides a ligand contact to Zn(2+). N-formimidoyl-L-glutamate-binding residues include N334 and G336. S337 serves as a coordination point for 4-imidazolone-5-propanoate.

This sequence belongs to the metallo-dependent hydrolases superfamily. HutI family. It depends on Zn(2+) as a cofactor. Fe(3+) serves as cofactor.

It is found in the cytoplasm. It carries out the reaction 4-imidazolone-5-propanoate + H2O = N-formimidoyl-L-glutamate. The protein operates within amino-acid degradation; L-histidine degradation into L-glutamate; N-formimidoyl-L-glutamate from L-histidine: step 3/3. In terms of biological role, catalyzes the hydrolytic cleavage of the carbon-nitrogen bond in imidazolone-5-propanoate to yield N-formimidoyl-L-glutamate. It is the third step in the universal histidine degradation pathway. This Alteromonas mediterranea (strain DSM 17117 / CIP 110805 / LMG 28347 / Deep ecotype) protein is Imidazolonepropionase.